Consider the following 576-residue polypeptide: Rho GTPase-activating protein gacP (576 aa).

Residues Leu-123–Asp-189 are a coiled coil. In terms of domain architecture, Rho-GAP spans Glu-277–Phe-462. Positions Val-472 to Asp-576 are disordered. Low complexity predominate over residues Asn-482 to Ser-500. Residues Ala-501–Thr-513 show a composition bias toward polar residues. The span at Asn-514 to Asn-530 shows a compositional bias: low complexity. The segment covering Ser-565 to Asp-576 has biased composition (acidic residues).

Its subcellular location is the cytoplasm. Its function is as follows. Rho GTPase-activating protein involved in the signal transduction pathway. This chain is Rho GTPase-activating protein gacP (gacP), found in Dictyostelium discoideum (Social amoeba).